We begin with the raw amino-acid sequence, 152 residues long: Aminoglycoside N(6')-acetyltransferase type 1 (152 aa).

Residues 5-152 (PLVRPVETTD…AQVRCFRKPL (148 aa)) form the N-acetyltransferase domain. Substrate contacts are provided by Trp-26, Tyr-73, Glu-86, and Asp-122. Asn-127 contributes to the acetyl-CoA binding site.

In terms of assembly, homodimer.

The enzyme catalyses kanamycin B + acetyl-CoA = N(6')-acetylkanamycin B + CoA + H(+). Catalyzes the transfer of an acetyl group from acetyl-CoA to the 6'-amino group of aminoglycoside molecules conferring resistance to antibiotics containing the purpurosamine ring including amikacin. The protein is Aminoglycoside N(6')-acetyltransferase type 1 (aacA7) of Klebsiella aerogenes (Enterobacter aerogenes).